A 362-amino-acid polypeptide reads, in one-letter code: Peptide chain release factor 1 (362 aa).

Glutamine 240 is subject to N5-methylglutamine.

Belongs to the prokaryotic/mitochondrial release factor family. Post-translationally, methylated by PrmC. Methylation increases the termination efficiency of RF1.

Its subcellular location is the cytoplasm. In terms of biological role, peptide chain release factor 1 directs the termination of translation in response to the peptide chain termination codons UAG and UAA. The polypeptide is Peptide chain release factor 1 (Bifidobacterium longum (strain NCC 2705)).